We begin with the raw amino-acid sequence, 216 residues long: Protein E4.2 (216 aa).

This chain is Protein E4.2, found in Pantherophis guttatus (Corn snake).